Reading from the N-terminus, the 323-residue chain is 8-oxo-dGDP phosphatase NUDT18 (323 aa).

Residues 37-167 form the Nudix hydrolase domain; it reads RLRKNVCYVV…DVLHLVELGA (131 aa). Leu-58 is a binding site for Mg(2+). Positions 76-97 match the Nudix box motif; the sequence is GRMEPGETIVEAMQREVKEEAG.

The protein belongs to the Nudix hydrolase family. Mn(2+) serves as cofactor. It depends on Mg(2+) as a cofactor.

The enzyme catalyses 8-oxo-dGDP + H2O = 8-oxo-dGMP + phosphate + H(+). It carries out the reaction 8-oxo-dADP + H2O = 8-oxo-dAMP + phosphate + H(+). The catalysed reaction is 2-oxo-dADP + H2O = 2-oxo-dAMP + phosphate + H(+). It catalyses the reaction 8-oxo-GDP + H2O = 8-oxo-GMP + phosphate + H(+). Its function is as follows. Mediates the hydrolysis of oxidized nucleoside diphosphate derivatives. Hydrolyzes 8-oxo-7,8-dihydroguanine (8-oxo-Gua)-containing deoxyribo- and ribonucleoside diphosphates to the monophosphates. Hydrolyzes 8-oxo-dGDP and 8-oxo-GDP with the same efficiencies. Also hydrolyzes 8-OH-dADP and 2-OH-dADP. Exhibited no or minimal hydrolysis activity against 8-oxo-dGTP, 8-oxo-GTP, dGTP, GTP, dGDP and GDP. Probably removes oxidized guanine nucleotides from both the DNA and RNA precursor pools. The protein is 8-oxo-dGDP phosphatase NUDT18 of Mus musculus (Mouse).